Reading from the N-terminus, the 1196-residue chain is FIP1[V]-like protein (1196 aa).

Disordered stretches follow at residues 1–102 (MEED…TIPG), 117–248 (GVSQ…SHGY), 268–300 (GAASVGGPSSGQVRPPANLGPMAGRGRGDWRPL), 413–472 (GAQG…PRMR), and 485–1174 (SHED…IEGP). Over residues 18 to 31 (FQPPVVLPPPPPLP) the composition is skewed to pro residues. Polar residues predominate over residues 117 to 126 (GVSQVTTRIE). Positions 129-141 (VGGGGDGGYGGQG) are enriched in gly residues. 2 stretches are compositionally biased toward acidic residues: residues 142–154 (EGDDWDSDSEDDL) and 179–190 (NEDDDDEDDEDP). Over residues 226-236 (AGKGSGPGGAT) the composition is skewed to gly residues. A compositionally biased stretch (low complexity) spans 268 to 278 (GAASVGGPSSG). The span at 518–548 (KRPDTESAEHSPAQDEPHKNLLKKQDDEISR) shows a compositional bias: basic and acidic residues. Over residues 549-561 (STDSGQSFRSSSP) the composition is skewed to polar residues. Basic and acidic residues-rich tracts occupy residues 565–592 (RGTRSSSVDREDVGGEAGKDAEMGEELK) and 608–641 (GESKTERSSESSKARSGSHRDFQQEEDVIQDKHS). Positions 643 to 657 (RPANNRKQYDNNAPH) are enriched in polar residues. Composition is skewed to basic and acidic residues over residues 661–673 (KNQDRGKEMERTR), 699–802 (SRED…EKNE), 810–918 (SMSR…DTLR), 925–945 (RRDYPGEESSSHHRGHEDFSA), and 953–971 (NEKKPRQERTGAKIDKFID). Short sequence motifs (nuclear localization signal) lie at residues 704 to 711 (DKRKERDV) and 734 to 741 (RKRDREDD). A compositionally biased stretch (polar residues) spans 998–1021 (ESLSKQGEQNGSSVVTGSKGTNDA). Basic and acidic residues-rich tracts occupy residues 1046 to 1071 (DEIHDSKRGRTKLERWASHKEREDAV), 1103 to 1137 (KSRDVTEEKIGHDLADTKDGSEKGPGDRHLDTVEK), and 1151 to 1163 (TEKDTTGVKKMES).

Belongs to the FIP1 family. Component of the cleavage and polyadenylation specificity factor (CPSF) complex. Forms a complex with cleavage and polyadenylation specificity factor (CPSF) subunits CFIS1, CFIS2, CPSF30, CSTF50, CSTF64, CSTF77, FIPS3, PABN1, PABN2, PABN3, PAPS4, CFIM25 and PABN1. Binds RNA. Expressed in leaves, stems, flower tissues and roots.

It is found in the nucleus. Essential gene. Component of the cleavage and polyadenylation specificity factor (CPSF) complex that plays a key role in pre-mRNA 3'-end formation, recognizing the AAUAAA signal sequence and interacting with poly(A) polymerase and other factors to bring about cleavage and poly(A) addition. FIP1L1 contributes to poly(A) site recognition and stimulates poly(A) addition. Binds to U-rich RNA sequence elements surrounding the poly(A) site. May act to tether poly(A) polymerase to the CPSF complex. The sequence is that of FIP1[V]-like protein from Arabidopsis thaliana (Mouse-ear cress).